Consider the following 238-residue polypeptide: uncharacterized protein (238 aa).

A run of 5 helical transmembrane segments spans residues methionine 6–isoleucine 26, phenylalanine 45–leucine 65, isoleucine 98–isoleucine 118, isoleucine 160–leucine 180, and isoleucine 186–alanine 206.

Belongs to the TMEM19 family.

Its subcellular location is the cell membrane. This is an uncharacterized protein from Methanocaldococcus jannaschii (strain ATCC 43067 / DSM 2661 / JAL-1 / JCM 10045 / NBRC 100440) (Methanococcus jannaschii).